The sequence spans 161 residues: Regulator of ribonuclease activity A (161 aa).

The protein belongs to the RraA family. In terms of assembly, homotrimer. Binds to both RNA-binding sites in the C-terminal region of Rne and to RhlB.

It is found in the cytoplasm. Its function is as follows. Globally modulates RNA abundance by binding to RNase E (Rne) and regulating its endonucleolytic activity. Can modulate Rne action in a substrate-dependent manner by altering the composition of the degradosome. Modulates RNA-binding and helicase activities of the degradosome. The chain is Regulator of ribonuclease activity A from Erwinia tasmaniensis (strain DSM 17950 / CFBP 7177 / CIP 109463 / NCPPB 4357 / Et1/99).